We begin with the raw amino-acid sequence, 106 residues long: L-rhamnose mutarotase (106 aa).

Tyrosine 20 is a binding site for substrate. Histidine 24 acts as the Proton donor in catalysis. Substrate is bound by residues tyrosine 43 and 78–79 (WW).

It belongs to the rhamnose mutarotase family. In terms of assembly, homodimer.

The protein resides in the cytoplasm. It catalyses the reaction alpha-L-rhamnose = beta-L-rhamnose. It functions in the pathway carbohydrate metabolism; L-rhamnose metabolism. In terms of biological role, involved in the anomeric conversion of L-rhamnose. The chain is L-rhamnose mutarotase from Rhizobium etli (strain ATCC 51251 / DSM 11541 / JCM 21823 / NBRC 15573 / CFN 42).